The following is a 339-amino-acid chain: Fructose-1,6-bisphosphatase class 1 (339 aa).

4 residues coordinate Mg(2+): Glu-92, Asp-114, Leu-116, and Asp-117. Substrate is bound by residues 117–120, Asn-209, and Lys-275; that span reads DGSS. Glu-281 is a Mg(2+) binding site.

This sequence belongs to the FBPase class 1 family. In terms of assembly, homotetramer. The cofactor is Mg(2+).

The protein resides in the cytoplasm. It catalyses the reaction beta-D-fructose 1,6-bisphosphate + H2O = beta-D-fructose 6-phosphate + phosphate. Its pathway is carbohydrate biosynthesis; gluconeogenesis. The protein is Fructose-1,6-bisphosphatase class 1 of Acidithiobacillus ferrooxidans (strain ATCC 53993 / BNL-5-31) (Leptospirillum ferrooxidans (ATCC 53993)).